Here is a 246-residue protein sequence, read N- to C-terminus: PF03932 family protein CutC (246 aa).

Belongs to the CutC family.

It is found in the cytoplasm. In Treponema denticola (strain ATCC 35405 / DSM 14222 / CIP 103919 / JCM 8153 / KCTC 15104), this protein is PF03932 family protein CutC.